A 398-amino-acid chain; its full sequence is Putative FBD-associated F-box protein At5g56700 (398 aa).

The F-box domain occupies 1–47 (MAKISDLSDELLVKILSFLPTKEAVSTSCLSKQWEFLWMWLSKLEFY). The FBD domain occupies 340 to 388 (WKNNKSSVPKCLLESLETFEFAGYIGTPEERDFLSYIFKHARCLKSSSI).

This is Putative FBD-associated F-box protein At5g56700 from Arabidopsis thaliana (Mouse-ear cress).